The following is a 258-amino-acid chain: Pimeloyl-[acyl-carrier protein] methyl ester esterase (258 aa).

In terms of domain architecture, AB hydrolase-1 spans leucine 16–histidine 241. Substrate-binding positions include tryptophan 22, serine 82–methionine 83, and phenylalanine 143–glutamine 147. Residue serine 82 is the Nucleophile of the active site. Active-site residues include aspartate 207 and histidine 235. Substrate is bound at residue histidine 235.

It belongs to the AB hydrolase superfamily. Carboxylesterase BioH family. In terms of assembly, monomer.

The protein localises to the cytoplasm. It carries out the reaction 6-carboxyhexanoyl-[ACP] methyl ester + H2O = 6-carboxyhexanoyl-[ACP] + methanol + H(+). It participates in cofactor biosynthesis; biotin biosynthesis. In terms of biological role, the physiological role of BioH is to remove the methyl group introduced by BioC when the pimeloyl moiety is complete. It allows to synthesize pimeloyl-ACP via the fatty acid synthetic pathway through the hydrolysis of the ester bonds of pimeloyl-ACP esters. This is Pimeloyl-[acyl-carrier protein] methyl ester esterase from Yersinia enterocolitica serotype O:8 / biotype 1B (strain NCTC 13174 / 8081).